The primary structure comprises 631 residues: Pro-interleukin-16 (631 aa).

Disordered regions lie at residues 30-269 (ENPG…FPLT) and 317-344 (PKEG…ASDT). The span at 132–144 (SSSSSSIKQRISS) shows a compositional bias: low complexity. Ser-221 is modified (phosphoserine). Residues 322-344 (SPTSSSNEDSAANGSAETSASDT) show a composition bias toward polar residues. Positions 405 to 501 (KQLDSIHVTI…IVTRKLTAES (97 aa)) are interaction with PPP1R12A, PPP1R12B and PPP1R12C. 2 consecutive PDZ domains span residues 411–496 (HVTI…VTRK) and 533–618 (TVTL…IRRK).

In terms of assembly, homotetramer. Pro-interleukin-16 interacts (via PDZ 2 domain) with PPP1R12A, PPP1R12B and PPP1R12C. Pro-interleukin-16 interacts with GRIN2A. Pro-interleukin-16 interacts with GABPB1. Pro-interleukin-16 interacts (via PDZ 3 domain) with HDAC3.

The protein localises to the secreted. It is found in the cytoplasm. Its subcellular location is the nucleus. In terms of biological role, interleukin-16 stimulates a migratory response in CD4+ lymphocytes, monocytes, and eosinophils. Primes CD4+ T-cells for IL-2 and IL-15 responsiveness. Also induces T-lymphocyte expression of interleukin 2 receptor. Ligand for CD4. Its function is as follows. Pro-interleukin-16 is involved in cell cycle progression in T-cells. Appears to be involved in transcriptional regulation of SKP2 and is probably part of a transcriptional repression complex on the core promoter of the SKP2 gene. May act as a scaffold for GABPB1 (the DNA-binding subunit the GABP transcription factor complex) and HDAC3 thus maintaining transcriptional repression and blocking cell cycle progression in resting T-cells. The polypeptide is Pro-interleukin-16 (IL16) (Chlorocebus aethiops (Green monkey)).